The following is a 126-amino-acid chain: Probable DNA-directed RNA polymerase II subunit RPB11 (126 aa).

It belongs to the archaeal Rpo11/eukaryotic RPB11/RPC19 RNA polymerase subunit family. As to quaternary structure, component of the RNA polymerase II (Pol II) complex consisting of 12 subunits.

Its subcellular location is the nucleus. In terms of biological role, DNA-dependent RNA polymerase catalyzes the transcription of DNA into RNA using the four ribonucleoside triphosphates as substrates. Component of RNA polymerase II which synthesizes mRNA precursors and many functional non-coding RNAs. Pol II is the central component of the basal RNA polymerase II transcription machinery. It is composed of mobile elements that move relative to each other. RPB11 is part of the core element with the central large cleft. The chain is Probable DNA-directed RNA polymerase II subunit RPB11 from Plasmodium falciparum (isolate 3D7).